We begin with the raw amino-acid sequence, 152 residues long: Sec-independent protein translocase protein TatB (152 aa).

The chain crosses the membrane as a helical span at residues 1 to 21; it reads MFDLGWSELLVIGVVALIVVG.

Belongs to the TatB family. In terms of assembly, the Tat system comprises two distinct complexes: a TatABC complex, containing multiple copies of TatA, TatB and TatC subunits, and a separate TatA complex, containing only TatA subunits. Substrates initially bind to the TatABC complex, which probably triggers association of the separate TatA complex to form the active translocon.

Its subcellular location is the cell inner membrane. Functionally, part of the twin-arginine translocation (Tat) system that transports large folded proteins containing a characteristic twin-arginine motif in their signal peptide across membranes. Together with TatC, TatB is part of a receptor directly interacting with Tat signal peptides. TatB may form an oligomeric binding site that transiently accommodates folded Tat precursor proteins before their translocation. This chain is Sec-independent protein translocase protein TatB, found in Ruegeria pomeroyi (strain ATCC 700808 / DSM 15171 / DSS-3) (Silicibacter pomeroyi).